A 368-amino-acid polypeptide reads, in one-letter code: Phospho-N-acetylmuramoyl-pentapeptide-transferase (368 aa).

Transmembrane regions (helical) follow at residues 30 to 50 (AAAV…IKYL), 72 to 92 (LPTM…FLWA), 99 to 119 (VWLI…DDYM), 139 to 159 (VLLG…SVLL), 170 to 190 (LTID…TAVS), 201 to 221 (GLAS…AYLA), 238 to 258 (GGEI…FLWF), 264 to 286 (EIIM…ALLI), and 345 to 365 (KIVI…LMTL).

Belongs to the glycosyltransferase 4 family. MraY subfamily. The cofactor is Mg(2+).

The protein resides in the cell inner membrane. It catalyses the reaction UDP-N-acetyl-alpha-D-muramoyl-L-alanyl-gamma-D-glutamyl-meso-2,6-diaminopimeloyl-D-alanyl-D-alanine + di-trans,octa-cis-undecaprenyl phosphate = di-trans,octa-cis-undecaprenyl diphospho-N-acetyl-alpha-D-muramoyl-L-alanyl-D-glutamyl-meso-2,6-diaminopimeloyl-D-alanyl-D-alanine + UMP. Its pathway is cell wall biogenesis; peptidoglycan biosynthesis. Its function is as follows. Catalyzes the initial step of the lipid cycle reactions in the biosynthesis of the cell wall peptidoglycan: transfers peptidoglycan precursor phospho-MurNAc-pentapeptide from UDP-MurNAc-pentapeptide onto the lipid carrier undecaprenyl phosphate, yielding undecaprenyl-pyrophosphoryl-MurNAc-pentapeptide, known as lipid I. This chain is Phospho-N-acetylmuramoyl-pentapeptide-transferase, found in Chlorobium limicola (strain DSM 245 / NBRC 103803 / 6330).